A 245-amino-acid polypeptide reads, in one-letter code: MKKVLAKITYDGSLYYGFQIQPKKPTIQGEIEKVLEKISKTKIKIHSAGRTDKGVHARGQIISFYIKINIKLKNLKTAINSLLKDDIRIIKLKYVEDKFQPRFDAKRRKYSYYILNNENHYPWEGYRAYYVKKKLNINRLNEMAEMLIGIHDFTTFSCIRDQTNSKLKEIYYARFKKKNKFIIFEIIGSSFLWKMVRSIVGVMIDIEIKNEPVDTFKKILNSKNRKLTRKTAPAKALFLDKVFYE.

Asp-52 functions as the Nucleophile in the catalytic mechanism. Tyr-110 contacts substrate.

It belongs to the tRNA pseudouridine synthase TruA family. As to quaternary structure, homodimer.

The catalysed reaction is uridine(38/39/40) in tRNA = pseudouridine(38/39/40) in tRNA. Functionally, formation of pseudouridine at positions 38, 39 and 40 in the anticodon stem and loop of transfer RNAs. In Borrelia turicatae (strain 91E135), this protein is tRNA pseudouridine synthase A.